The sequence spans 493 residues: Glutamyl-tRNA(Gln) amidotransferase subunit A (493 aa).

Catalysis depends on charge relay system residues K79 and S159. The Acyl-ester intermediate role is filled by S183.

It belongs to the amidase family. GatA subfamily. As to quaternary structure, heterotrimer of A, B and C subunits.

It carries out the reaction L-glutamyl-tRNA(Gln) + L-glutamine + ATP + H2O = L-glutaminyl-tRNA(Gln) + L-glutamate + ADP + phosphate + H(+). Allows the formation of correctly charged Gln-tRNA(Gln) through the transamidation of misacylated Glu-tRNA(Gln) in organisms which lack glutaminyl-tRNA synthetase. The reaction takes place in the presence of glutamine and ATP through an activated gamma-phospho-Glu-tRNA(Gln). In Chelativorans sp. (strain BNC1), this protein is Glutamyl-tRNA(Gln) amidotransferase subunit A.